Reading from the N-terminus, the 81-residue chain is U-megalopygitoxin(3)-Mo4 (81 aa).

The first 20 residues, 1–20 (MNSKFVLIVVFLAVVSICFA), serve as a signal peptide directing secretion.

It belongs to the caterpillar 3 family. Contains 3 disulfide bonds. As to expression, expressed by the venom apparatus.

The protein localises to the secreted. Functionally, probable toxin. The protein is U-megalopygitoxin(3)-Mo4 of Megalopyge opercularis (Southern flannel moth).